Here is a 125-residue protein sequence, read N- to C-terminus: Apolipoprotein C-IV (125 aa).

A signal peptide spans 1–27 (MSLLRHSLQALPALCLCVLVLACIGAC).

This sequence belongs to the apolipoprotein C4 family.

It localises to the secreted. Its function is as follows. May participate in lipoprotein metabolism. In Ateles geoffroyi (Black-handed spider monkey), this protein is Apolipoprotein C-IV (APOC4).